A 91-amino-acid polypeptide reads, in one-letter code: uncharacterized protein (91 aa).

Residues 50-70 (FGFFGGPFIGGLAGGLIGSAL) traverse the membrane as a helical segment.

It localises to the cell membrane. This is an uncharacterized protein from Bacillus subtilis (strain 168).